A 222-amino-acid chain; its full sequence is Phosphoribosylformylglycinamidine synthase subunit PurQ (222 aa).

The Glutamine amidotransferase type-1 domain occupies 3 to 222 (AAVVVFPGSN…RALAGALTPA (220 aa)). The active-site Nucleophile is the Cys-86. Residues His-194 and Glu-196 contribute to the active site.

In terms of assembly, part of the FGAM synthase complex composed of 1 PurL, 1 PurQ and 2 PurS subunits.

The protein localises to the cytoplasm. It catalyses the reaction N(2)-formyl-N(1)-(5-phospho-beta-D-ribosyl)glycinamide + L-glutamine + ATP + H2O = 2-formamido-N(1)-(5-O-phospho-beta-D-ribosyl)acetamidine + L-glutamate + ADP + phosphate + H(+). The catalysed reaction is L-glutamine + H2O = L-glutamate + NH4(+). It participates in purine metabolism; IMP biosynthesis via de novo pathway; 5-amino-1-(5-phospho-D-ribosyl)imidazole from N(2)-formyl-N(1)-(5-phospho-D-ribosyl)glycinamide: step 1/2. Functionally, part of the phosphoribosylformylglycinamidine synthase complex involved in the purines biosynthetic pathway. Catalyzes the ATP-dependent conversion of formylglycinamide ribonucleotide (FGAR) and glutamine to yield formylglycinamidine ribonucleotide (FGAM) and glutamate. The FGAM synthase complex is composed of three subunits. PurQ produces an ammonia molecule by converting glutamine to glutamate. PurL transfers the ammonia molecule to FGAR to form FGAM in an ATP-dependent manner. PurS interacts with PurQ and PurL and is thought to assist in the transfer of the ammonia molecule from PurQ to PurL. This is Phosphoribosylformylglycinamidine synthase subunit PurQ from Ruegeria pomeroyi (strain ATCC 700808 / DSM 15171 / DSS-3) (Silicibacter pomeroyi).